The following is a 360-amino-acid chain: Peptide chain release factor 1 (360 aa).

Gln-235 carries the N5-methylglutamine modification. The segment covering 284-293 has biased composition (basic and acidic residues); that stretch reads HKRQQEEAST. Positions 284-305 are disordered; the sequence is HKRQQEEASTRRNLLGSGDRSD.

Belongs to the prokaryotic/mitochondrial release factor family. Methylated by PrmC. Methylation increases the termination efficiency of RF1.

The protein resides in the cytoplasm. Functionally, peptide chain release factor 1 directs the termination of translation in response to the peptide chain termination codons UAG and UAA. The sequence is that of Peptide chain release factor 1 from Pectobacterium atrosepticum (strain SCRI 1043 / ATCC BAA-672) (Erwinia carotovora subsp. atroseptica).